Reading from the N-terminus, the 80-residue chain is U19-lycotoxin-Ls1a (80 aa).

An N-terminal signal peptide occupies residues 1–22 (MSPKVQALIFIVGLITLLAAHA). The propeptide occupies 23–34 (QEELSDNIESER). Cystine bridges form between C36–C50, C43–C55, C49–C66, and C57–C64.

Belongs to the neurotoxin 02 (plectoxin) family. 05 (U19-lycotoxin) subfamily. As to expression, expressed by the venom gland.

It localises to the secreted. This chain is U19-lycotoxin-Ls1a, found in Lycosa singoriensis (Wolf spider).